The sequence spans 473 residues: Suppressor of SWI4 1 homolog (473 aa).

The 264-residue stretch at 29 to 292 (PHSFVFTRGC…LIKVQEGVGE (264 aa)) folds into the Brix domain. Residues Ser-238 and Ser-240 each carry the phosphoserine modification. The interval 323 to 473 (AQRQAQQAQN…GRGRPGKRVA (151 aa)) is disordered. Low complexity predominate over residues 324–334 (QRQAQQAQNVQ). Basic and acidic residues predominate over residues 335–352 (RKQEQREAHRKKSLEGMK). Ser-359 bears the Phosphoserine mark. Residues 375 to 388 (LGEDDDEQEDDDIE) show a composition bias toward acidic residues. Over residues 409-421 (KRLAKSPGRKRKR) the composition is skewed to basic residues. Residues 422–443 (WEMDRGRGRLCDQKFPKTKDKS) show a composition bias toward basic and acidic residues. Lys-438 bears the N6-acetyllysine mark. The span at 462–473 (GRGRGRPGKRVA) shows a compositional bias: basic residues.

Widely expressed.

It localises to the nucleus. The protein resides in the nucleolus. Functionally, may have a role in cell growth. This chain is Suppressor of SWI4 1 homolog (PPAN), found in Homo sapiens (Human).